The following is a 111-amino-acid chain: RNA polymerase-binding protein RbpA (111 aa).

It belongs to the RNA polymerase-binding protein RbpA family. Forms a complex with the RNAP catalytic core and with free principal sigma factors.

Functionally, binds to RNA polymerase (RNAP), stimulating transcription from principal, but not alternative sigma factor promoters. The polypeptide is RNA polymerase-binding protein RbpA (Mycobacterium tuberculosis (strain CDC 1551 / Oshkosh)).